Consider the following 72-residue polypeptide: MAREDHIEMEGVVVDTLPNTMFRVELENGHVVTAHISGKMRKNYIRILTGDKVKVELTPYDLSKGRIVYRAR.

Positions 1 to 72 (MAREDHIEME…SKGRIVYRAR (72 aa)) constitute an S1-like domain.

It belongs to the IF-1 family. As to quaternary structure, component of the 30S ribosomal translation pre-initiation complex which assembles on the 30S ribosome in the order IF-2 and IF-3, IF-1 and N-formylmethionyl-tRNA(fMet); mRNA recruitment can occur at any time during PIC assembly.

It localises to the cytoplasm. In terms of biological role, one of the essential components for the initiation of protein synthesis. Stabilizes the binding of IF-2 and IF-3 on the 30S subunit to which N-formylmethionyl-tRNA(fMet) subsequently binds. Helps modulate mRNA selection, yielding the 30S pre-initiation complex (PIC). Upon addition of the 50S ribosomal subunit IF-1, IF-2 and IF-3 are released leaving the mature 70S translation initiation complex. The protein is Translation initiation factor IF-1 of Chromohalobacter salexigens (strain ATCC BAA-138 / DSM 3043 / CIP 106854 / NCIMB 13768 / 1H11).